The primary structure comprises 1668 residues: Probable histone acetyltransferase HAC-like 1 (1668 aa).

Disordered stretches follow at residues 1–34 (MNVG…ADGL), 459–493 (QQQP…SEQG), and 528–551 (KGGQ…HDSQ). Over residues 11–23 (GQMSGQAPQTNQV) the composition is skewed to polar residues. The span at 459 to 469 (QQQPNSQHQQS) shows a compositional bias: low complexity. Composition is skewed to polar residues over residues 470 to 491 (ILRS…QLSE) and 536 to 551 (LSSS…HDSQ). A TAZ-type 1 zinc finger spans residues 651-732 (AAGNIYYFRQ…DLQCPVCSNA (82 aa)). Positions 886–899 (KETSETAPEVKNEA) are enriched in basic and acidic residues. The segment at 886–912 (KETSETAPEVKNEANDSTDITVSKSGK) is disordered. The span at 900-909 (NDSTDITVSK) shows a compositional bias: polar residues. The PHD-type zinc finger occupies 1002-1079 (HFFCIPCYNE…EYTCPNCYVE (78 aa)). The CBP/p300-type HAT domain occupies 1094-1530 (VLGAKDLPRT…VLYHLHNPTA (437 aa)). Acetyl-CoA is bound by residues 1217–1219 (LDS), 1236–1237 (RT), and tryptophan 1292. Residues 1342–1365 (GAAEDMINQLRQEEDDRKQQKKGK) are a coiled coil. The segment at 1412-1475 (HLQYSCSHCC…TLHPVDIVGL (64 aa)) adopts a ZZ-type zinc-finger fold. Zn(2+) is bound by residues cysteine 1417, cysteine 1420, cysteine 1432, cysteine 1435, cysteine 1441, cysteine 1444, histidine 1457, and histidine 1465. Residues 1553 to 1634 (EVCPDFDLRK…GCNVPRCRDL (82 aa)) form a TAZ-type 2 zinc finger. Positions 1630–1650 (RCRDLKEHLRRLQQQSDSRRR) form a coiled coil.

It is found in the nucleus. It carries out the reaction L-lysyl-[protein] + acetyl-CoA = N(6)-acetyl-L-lysyl-[protein] + CoA + H(+). Functionally, acetyltransferase enzyme. Acetylates histones, giving a specific tag for transcriptional activation. The sequence is that of Probable histone acetyltransferase HAC-like 1 from Oryza sativa subsp. japonica (Rice).